Here is a 501-residue protein sequence, read N- to C-terminus: AKT kinase-transforming protein (501 aa).

Residues 26-129 form the PH domain; it reads AIVKEGWLHK…WATAIQTVAD (104 aa). Positions 135 to 158 are disordered; that stretch reads EEETMDFRSGSPSDNSGAEEMEVS. The region spanning 171-429 is the Protein kinase domain; it reads FEYLKLLGKG…AKEIMQHRFF (259 aa). ATP contacts are provided by residues 177 to 185 and Lys200; that span reads LGKGTFGKV. Catalysis depends on Asp295, which acts as the Proton acceptor. A Phosphotyrosine modification is found at Tyr347. The 72-residue stretch at 430–501 folds into the AGC-kinase C-terminal domain; the sequence is ANIVWQDVYE…QFSYSASGTA (72 aa). Residues 471–501 form a disordered region; it reads TPPDQDDSMECVDSERRPHFPQFSYSASGTA.

Belongs to the protein kinase superfamily. AGC Ser/Thr protein kinase family. RAC subfamily. As to quaternary structure, interacts with mouse THEM4. Post-translationally, autophosphorylated on threonine and serine residues.

It carries out the reaction L-seryl-[protein] + ATP = O-phospho-L-seryl-[protein] + ADP + H(+). The catalysed reaction is L-threonyl-[protein] + ATP = O-phospho-L-threonyl-[protein] + ADP + H(+). This chain is AKT kinase-transforming protein (V-AKT), found in Mus musculus (Mouse).